The chain runs to 673 residues: Polygalacturonate 4-alpha-galacturonosyltransferase (673 aa).

Residues 1 to 22 (MALKRGLSGVNRIRGSGGGSRS) lie on the Cytoplasmic side of the membrane. The helical; Signal-anchor for type II membrane protein transmembrane segment at 23–43 (VLVLLIFFCVFAPLCFFVGRG) threads the bilayer. Topologically, residues 44 to 673 (VYIDSSNDYS…PYLRRCNLHE (630 aa)) are lumenal. N-linked (GlcNAc...) asparagine glycosylation occurs at N103. The tract at residues 112–136 (GVDPSFRHSENPATPDVKSNNLNEK) is disordered. 4 N-linked (GlcNAc...) asparagine glycosylation sites follow: N382, N434, N538, and N585.

It belongs to the glycosyltransferase 8 family. Expressed in seedlings, inflorescences, flowers, siliques, pollen, roots, stems and leaves.

It is found in the golgi apparatus membrane. The catalysed reaction is [(1-&gt;4)-alpha-D-galacturonosyl](n) + UDP-alpha-D-galacturonate = [(1-&gt;4)-alpha-D-galacturonosyl](n+1) + UDP + H(+). It functions in the pathway glycan metabolism; pectin biosynthesis. Functionally, involved in pectin biosynthesis. Catalyzes the transfer of galacturonic acid from uridine 5'-diphosphogalacturonic acid onto the pectic polysaccharide homogalacturonan. The polypeptide is Polygalacturonate 4-alpha-galacturonosyltransferase (GAUT1) (Arabidopsis thaliana (Mouse-ear cress)).